The primary structure comprises 256 residues: Vesicle-associated protein 1-1 (256 aa).

An N-acetylmethionine modification is found at Met1. The Cytoplasmic segment spans residues 1 to 232 (MSNIDLIGMS…RRESKKSQSG (232 aa)). Residue Ser2 is modified to N-acetylserine; in Vesicle-associated protein 1-1, N-terminally processed. The region spanning 22-142 (LLTVEPLDLQ…EETKLRVTYV (121 aa)) is the MSP domain. The tract at residues 142 to 169 (VAPPRPPSPVHEGSEEGSSPRASVSDNG) is disordered. Ser149 is subject to Phosphoserine. Residues 157-169 (EGSSPRASVSDNG) show a composition bias toward polar residues. Positions 187-232 (HQENTSEARALITKLTEEKQSAIQLNNRLQRELDQLRRESKKSQSG) form a coiled coil. Residues 233–253 (GIPFMYVLLVGLIGLILGYIM) form a helical; Anchor for type IV membrane protein membrane-spanning segment.

It belongs to the VAMP-associated protein (VAP) (TC 9.B.17) family. In terms of assembly, homodimer or homooligomer. Interacts with the cowpea mosaic virus (CPMV) NTP-binding protein (NTB). Interacts with NET3C.

It localises to the endoplasmic reticulum membrane. It is found in the protein storage vacuole membrane. In terms of biological role, part of a membrane-cytoskeletal adapter complex that forms a bridge between the endoplasmic reticulum and the plasma membrane. Associates with microtubules. This chain is Vesicle-associated protein 1-1 (PVA11), found in Arabidopsis thaliana (Mouse-ear cress).